The primary structure comprises 332 residues: 2,3-diketo-L-gulonate reductase (332 aa).

The active-site Proton donor is the His44. Residues 168-174 (ITMVDMS), 224-225 (WK), and 304-306 (GHE) contribute to the NAD(+) site.

Belongs to the LDH2/MDH2 oxidoreductase family. DlgD subfamily. Homodimer.

The protein resides in the cytoplasm. The enzyme catalyses 3-dehydro-L-gulonate + NAD(+) = 2,3-dioxo-L-gulonate + NADH + H(+). It catalyses the reaction 3-dehydro-L-gulonate + NADP(+) = 2,3-dioxo-L-gulonate + NADPH + H(+). Its function is as follows. Catalyzes the reduction of 2,3-diketo-L-gulonate in the presence of NADH, to form 3-keto-L-gulonate. The polypeptide is 2,3-diketo-L-gulonate reductase (Salmonella paratyphi B (strain ATCC BAA-1250 / SPB7)).